The chain runs to 538 residues: MRVNNLTPQDLKAYGINDVQDIVYNPSYDTLYQEELNPGLEGYERGVLTNLGAVAVDTGIFTGRSPKDKYIVRDDTTRDTLWWSDKGKGKNDNKPLSQETWQHLKGLVTHQLSGKRLFIVDAFCGANADTRLSVRFITEVAWQAHFVKNMFIRPTDEELVGFKPDFIVMNGAKCTNPQWKEQGLNSENFVAFNLTERIQLIGGTWYGGEMKKGMFSVMNYLLPLKGIASMHCSANVGEKGDVAVFFGLSGTGKTTLSTDPKRRLIGDDEHGWDDDGVFNFEGGCYAKTIKLSKEAEPEIYHAIRRDALLENVTVREDGTVDFDDGSKTENTRVSYPIYHIDNIVKPVSKAGHATKVIFLTADFGVLPPVSRLTANQTQYHFLSGFTAKLAGTERGVTEPTPTFSACFGAAFLTLHPTQYAEVLVKRMQAAGAQAYLVNTGWNGTGKRISIKDTRAIIDAILNGSLDNAETFRLPLFDLAIPTELPGVDTHILDPRNTYASPEQWQEKATALAKLFIENFEKYTDTPAGEALVSAGPKL.

Substrate is bound at residue Arg64. Positions 149 and 151 each coordinate Ca(2+). The substrate site is built by Tyr206 and Lys212. ATP is bound by residues Lys212, His231, and 247–255; that span reads GLSGTGKTT. Lys212 and His231 together coordinate Mn(2+). Asp268 lines the Mn(2+) pocket. Residues Glu296, Arg332, 447-448, and Thr453 contribute to the ATP site; that span reads RI. Residue Arg332 participates in substrate binding.

It belongs to the phosphoenolpyruvate carboxykinase (ATP) family. In terms of assembly, monomer. Mn(2+) serves as cofactor.

Its subcellular location is the cytoplasm. It carries out the reaction oxaloacetate + ATP = phosphoenolpyruvate + ADP + CO2. Its pathway is carbohydrate biosynthesis; gluconeogenesis. With respect to regulation, allosterically activated by calcium. Involved in the gluconeogenesis. Catalyzes the conversion of oxaloacetate (OAA) to phosphoenolpyruvate (PEP) through direct phosphoryl transfer between the nucleoside triphosphate and OAA. The sequence is that of Phosphoenolpyruvate carboxykinase (ATP) from Salmonella typhimurium (strain LT2 / SGSC1412 / ATCC 700720).